The following is an 892-amino-acid chain: DNA mismatch repair protein MutS (892 aa).

An ATP-binding site is contributed by 607-614 (GPNMSGKS). Residues 833–855 (EESQLSFFGAEQSSKKQDKPALD) are disordered. Basic and acidic residues predominate over residues 845-855 (SSKKQDKPALD).

Belongs to the DNA mismatch repair MutS family.

In terms of biological role, this protein is involved in the repair of mismatches in DNA. It is possible that it carries out the mismatch recognition step. This protein has a weak ATPase activity. In Bacillus anthracis (strain A0248), this protein is DNA mismatch repair protein MutS.